The sequence spans 93 residues: Acylphosphatase (93 aa).

The Acylphosphatase-like domain occupies 6–93 (RAIVTVKGLV…GEFDTFDVRY (88 aa)). Active-site residues include Arg-21 and Asn-39.

The protein belongs to the acylphosphatase family.

The catalysed reaction is an acyl phosphate + H2O = a carboxylate + phosphate + H(+). In Geobacter metallireducens (strain ATCC 53774 / DSM 7210 / GS-15), this protein is Acylphosphatase (acyP).